We begin with the raw amino-acid sequence, 242 residues long: Probable transcriptional regulatory protein mhp472 (242 aa).

This sequence belongs to the TACO1 family.

It is found in the cytoplasm. This is Probable transcriptional regulatory protein mhp472 from Mesomycoplasma hyopneumoniae (strain 232) (Mycoplasma hyopneumoniae).